We begin with the raw amino-acid sequence, 108 residues long: UPF0235 protein APE_0182.1 (108 aa).

It belongs to the UPF0235 family.

This chain is UPF0235 protein APE_0182.1, found in Aeropyrum pernix (strain ATCC 700893 / DSM 11879 / JCM 9820 / NBRC 100138 / K1).